Here is a 373-residue protein sequence, read N- to C-terminus: UDP-3-O-acylglucosamine N-acyltransferase 2 (373 aa).

His-257 (proton acceptor) is an active-site residue. Positions 346-373 (DGRTAASAEAAAPSSDATGVDQPDQAAS) are disordered. Low complexity predominate over residues 350 to 362 (AASAEAAAPSSDA).

This sequence belongs to the transferase hexapeptide repeat family. LpxD subfamily. Homotrimer.

The enzyme catalyses a UDP-3-O-[(3R)-3-hydroxyacyl]-alpha-D-glucosamine + a (3R)-hydroxyacyl-[ACP] = a UDP-2-N,3-O-bis[(3R)-3-hydroxyacyl]-alpha-D-glucosamine + holo-[ACP] + H(+). Its pathway is bacterial outer membrane biogenesis; LPS lipid A biosynthesis. Its function is as follows. Catalyzes the N-acylation of UDP-3-O-acylglucosamine using 3-hydroxyacyl-ACP as the acyl donor. Is involved in the biosynthesis of lipid A, a phosphorylated glycolipid that anchors the lipopolysaccharide to the outer membrane of the cell. This is UDP-3-O-acylglucosamine N-acyltransferase 2 from Rhodopseudomonas palustris (strain BisB18).